We begin with the raw amino-acid sequence, 112 residues long: Protein Churchill (112 aa).

The Zn(2+) site is built by Cys2, Cys5, Cys30, Cys33, His59, Cys61, Cys64, His66, His71, Cys88, and Cys91.

This sequence belongs to the Churchill family.

Functionally, transcriptional activator that mediates FGF signaling during neural development. Plays a role in the regulation of cell movement. Does not bind DNA by itself. This chain is Protein Churchill (churc1), found in Xenopus laevis (African clawed frog).